The primary structure comprises 409 residues: MPRNIVVESVKLQPVEEQSVELVERKGLGHPDTIADAAAEISSQYLSRYYIEKYGTILHHNLDKVLVVGGQAAPRFGGGEVLQPIYIIVSGRATTEVRLPDGKTERIPIGTIILRAVKEWIREKFRFLDPESHIIVDYKVGQGSADLVGIYELGKDSVPLANDTSVGVGFAPFSTLEQLVLETERLLNSKEFKEKNPEVGEDIKVMGLRRGRKIELTIAAAIISSLVQDLDHYLSVKEAIKEAVLDLASRIAPDYDVEVYVNTADKPDKGIVYITVTGTSAEHGDDGMTGRGNRSYGLITPLRPMSLEAAAGKNPVSHVGKIYNVMALNIARRIYDNVSGIREVYVKLLSQIGRPINDPLIANIKVVSEKPGEPLPSNALREIEAIVEEELDKYQELTKLFVEGKITIF.

Gly141 to Asp146 contributes to the ATP binding site.

Belongs to the AdoMet synthase 2 family. It depends on Mg(2+) as a cofactor.

It catalyses the reaction L-methionine + ATP + H2O = S-adenosyl-L-methionine + phosphate + diphosphate. Its pathway is amino-acid biosynthesis; S-adenosyl-L-methionine biosynthesis; S-adenosyl-L-methionine from L-methionine: step 1/1. In terms of biological role, catalyzes the formation of S-adenosylmethionine from methionine and ATP. This chain is S-adenosylmethionine synthase, found in Hyperthermus butylicus (strain DSM 5456 / JCM 9403 / PLM1-5).